Here is a 216-residue protein sequence, read N- to C-terminus: U1 small nuclear ribonucleoprotein C (216 aa).

The Matrin-type zinc-finger motif lies at 4 to 36; it reads FFCDYCDVYLTHDSMSVRKAHNAGRNHLRNVVE. Composition is skewed to pro residues over residues 68 to 80, 87 to 198, and 206 to 216; these read AMAP…PPFG, QLPP…PAPP, and PGPPPGLSEKR. A disordered region spans residues 68–216; that stretch reads AMAPPGAFPP…GPPPGLSEKR (149 aa).

The protein belongs to the U1 small nuclear ribonucleoprotein C family. As to quaternary structure, U1 snRNP is composed of the 7 core Sm proteins B/B', D1, D2, D3, E, F and G that assemble in a heptameric protein ring on the Sm site of the small nuclear RNA to form the core snRNP, and at least 3 U1 snRNP-specific proteins U1-70K, U1-A and U1-C. U1-C interacts with U1 snRNA and the 5' splice-site region of the pre-mRNA.

It localises to the nucleus. In terms of biological role, component of the spliceosomal U1 snRNP, which is essential for recognition of the pre-mRNA 5' splice-site and the subsequent assembly of the spliceosome. U1-C is directly involved in initial 5' splice-site recognition for both constitutive and regulated alternative splicing. The interaction with the 5' splice-site seems to precede base-pairing between the pre-mRNA and the U1 snRNA. Stimulates commitment or early (E) complex formation by stabilizing the base pairing of the 5' end of the U1 snRNA and the 5' splice-site region. This is U1 small nuclear ribonucleoprotein C from Aspergillus fumigatus (strain ATCC MYA-4609 / CBS 101355 / FGSC A1100 / Af293) (Neosartorya fumigata).